The sequence spans 130 residues: Small ribosomal subunit protein uS8 (130 aa).

It belongs to the universal ribosomal protein uS8 family. In terms of assembly, part of the 30S ribosomal subunit. Contacts proteins S5 and S12.

One of the primary rRNA binding proteins, it binds directly to 16S rRNA central domain where it helps coordinate assembly of the platform of the 30S subunit. This Shewanella sediminis (strain HAW-EB3) protein is Small ribosomal subunit protein uS8.